The chain runs to 238 residues: 7-cyano-7-deazaguanine synthase (238 aa).

ATP is bound at residue 14-24; the sequence is FSGGQDSATCL. Positions 202, 217, 220, and 223 each coordinate Zn(2+).

The protein belongs to the QueC family. Requires Zn(2+) as cofactor.

It catalyses the reaction 7-carboxy-7-deazaguanine + NH4(+) + ATP = 7-cyano-7-deazaguanine + ADP + phosphate + H2O + H(+). Its pathway is purine metabolism; 7-cyano-7-deazaguanine biosynthesis. In terms of biological role, catalyzes the ATP-dependent conversion of 7-carboxy-7-deazaguanine (CDG) to 7-cyano-7-deazaguanine (preQ(0)). This chain is 7-cyano-7-deazaguanine synthase, found in Nitrobacter hamburgensis (strain DSM 10229 / NCIMB 13809 / X14).